A 335-amino-acid polypeptide reads, in one-letter code: Beta-ketoacyl-[acyl-carrier-protein] synthase III (335 aa).

Residues C119 and H261 contribute to the active site. The tract at residues 262–266 (QANQR) is ACP-binding. Residue N291 is part of the active site.

It belongs to the thiolase-like superfamily. FabH family. In terms of assembly, homodimer.

Its subcellular location is the cytoplasm. The enzyme catalyses malonyl-[ACP] + acetyl-CoA + H(+) = 3-oxobutanoyl-[ACP] + CO2 + CoA. It functions in the pathway lipid metabolism; fatty acid biosynthesis. Functionally, catalyzes the condensation reaction of fatty acid synthesis by the addition to an acyl acceptor of two carbons from malonyl-ACP. Catalyzes the first condensation reaction which initiates fatty acid synthesis and may therefore play a role in governing the total rate of fatty acid production. Possesses both acetoacetyl-ACP synthase and acetyl transacylase activities. Its substrate specificity determines the biosynthesis of branched-chain and/or straight-chain of fatty acids. The protein is Beta-ketoacyl-[acyl-carrier-protein] synthase III of Prochlorococcus marinus (strain MIT 9215).